Consider the following 369-residue polypeptide: 1-aminocyclopropane-1-carboxylate oxidase homolog 3 (369 aa).

Residues 217-318 form the Fe2OG dioxygenase domain; that stretch reads KGLLMLSHYY…VSVACFFTTG (102 aa). 3 residues coordinate Fe cation: histidine 241, aspartate 243, and histidine 297.

This sequence belongs to the iron/ascorbate-dependent oxidoreductase family. Requires Fe cation as cofactor.

The sequence is that of 1-aminocyclopropane-1-carboxylate oxidase homolog 3 from Arabidopsis thaliana (Mouse-ear cress).